The sequence spans 2527 residues: Highly reducing polyketide synthase poxF (2527 aa).

One can recognise a Ketosynthase family 3 (KS3) domain in the interval 20–445 (VMPIAIIGMA…GANAHVIVES (426 aa)). Residues Cys193, His328, and His368 each act as for beta-ketoacyl synthase activity in the active site. Residues 560 to 882 (VFTGQGAQWF…TYASCLSRGQ (323 aa)) form a malonyl-CoA:ACP transacylase (MAT) domain region. Residues 951–1086 (HDLLGVPAAG…GLCCTPSPAQ (136 aa)) are N-terminal hotdog fold. The dehydratase (DH) domain stretch occupies residues 951-1243 (HDLLGVPAAG…SVRVINNAGT (293 aa)). Positions 951-1270 (HDLLGVPAAG…CQSLGSSAVV (320 aa)) constitute a PKS/mFAS DH domain. His983 acts as the Proton acceptor; for dehydratase activity in catalysis. Positions 1108-1270 (AWRILNPADT…CQSLGSSAVV (163 aa)) are C-terminal hotdog fold. The active-site Proton donor; for dehydratase activity is the Asp1174. Positions 1406-1587 (EDQAEWSSVS…RLLAKAGFEP (182 aa)) are methyltransferase (CMet) domain. Positions 1823–2137 (GLLNSLVFTE…TGKHMGKIVL (315 aa)) are enoyl reductase (ER) (ER) domain. The tract at residues 2162–2339 (TYLLVGGVGG…AVSIDLGMVS (178 aa)) is ketoreductase (KR) domain. In terms of domain architecture, Carrier spans 2445-2522 (EVTTLIQSAL…GLAGQMAKKS (78 aa)). Ser2482 is modified (O-(pantetheine 4'-phosphoryl)serine).

It participates in secondary metabolite biosynthesis. In terms of biological role, highly reducing polyketide synthase; part of the gene cluster that mediates the biosynthesis of oxaleimides, cytotoxic compounds containing an unusual disubstituted succinimide moiety. The first step of the pathway is provided by the HR-PKS poxF that serves in a new mode of collaborative biosynthesis with the PKS-NRPS poxE, by providing the olefin containing amino acid substrate via the synthesis of an ACP-bound dec-4-enoate. The cytochrome P450 monooxygenase poxM-catalyzed oxidation at the alpha-position creates the enzyme-bound 2-hydroxydec-4-enoyl-ACP thioester, which may be prone to spontaneous hydrolysis to yield 2-hydroxydec-4-enoic acid due to increased electrophilicity of the carbonyl. 2-hydroxydec-4-enoic acid can then be further oxidized by poxM to yield the alpha-ketoacid 2-oxodec-4-enoicacid, which is reductively aminated by the aminotransferase poxL to yield (S,E)-2-aminodec-4-enoic acid. The Hybrid PKS-NRPS synthetase poxE then performs condensation between the octaketide product of its PKS modules and the amino group of (S,E)-2-aminodec-4-enoic acid which is activated and incorporated by the adenylation domain. The resulting aminoacyl product can be cyclized by the Diels-Alderase PoxQ and reductively released by the reductive (R) domain of poxE to yield an aldehyde intermediate. The released aldehyde is then substrate for a Knoevenagel condensation by the hydrolyase poxO followed by an oxidation at the 5-position of the pyrrolidone ring. The presence of the olefin from the amino acid building block allows for migration of the substituted allyl group to occur. This allylic transposition reaction takes place in a conjugate addition, semipinacol-like fashion to yield a succinimide intermediate. Iterative two-electron oxidations of the C7 methyl of the succinimide intermediate to the carboxylic acid can be catalyzed by one of two remaining cytochrome P450 monooxygenasess poxC or poxD to yield oxaleimide A. Subsequent oxidation yields the maleimide scaffold oxaleimide I. Both oxaleimide A and oxaleimide I can undergo oxidative modifications in the decalin ring to yield the series of products oxaleimides B to H. The polypeptide is Highly reducing polyketide synthase poxF (Penicillium oxalicum).